We begin with the raw amino-acid sequence, 209 residues long: Molybdenum cofactor guanylyltransferase (209 aa).

GTP contacts are provided by residues 13–15 (LAG), Lys-26, Asn-54, Asp-72, and Asp-107. Mg(2+) is bound at residue Asp-107.

This sequence belongs to the MobA family. As to quaternary structure, monomer. Mg(2+) serves as cofactor.

It localises to the cytoplasm. The catalysed reaction is Mo-molybdopterin + GTP + H(+) = Mo-molybdopterin guanine dinucleotide + diphosphate. Its function is as follows. Transfers a GMP moiety from GTP to Mo-molybdopterin (Mo-MPT) cofactor (Moco or molybdenum cofactor) to form Mo-molybdopterin guanine dinucleotide (Mo-MGD) cofactor. This chain is Molybdenum cofactor guanylyltransferase, found in Nitrobacter hamburgensis (strain DSM 10229 / NCIMB 13809 / X14).